Reading from the N-terminus, the 229-residue chain is Large ribosomal subunit protein uL3 (229 aa).

Gln151 is subject to N5-methylglutamine.

Belongs to the universal ribosomal protein uL3 family. Part of the 50S ribosomal subunit. Forms a cluster with proteins L14 and L19. Post-translationally, methylated by PrmB.

Functionally, one of the primary rRNA binding proteins, it binds directly near the 3'-end of the 23S rRNA, where it nucleates assembly of the 50S subunit. The chain is Large ribosomal subunit protein uL3 from Paramagnetospirillum magneticum (strain ATCC 700264 / AMB-1) (Magnetospirillum magneticum).